Consider the following 568-residue polypeptide: DNA mismatch repair protein MutL (568 aa).

Belongs to the DNA mismatch repair MutL/HexB family.

Functionally, this protein is involved in the repair of mismatches in DNA. It is required for dam-dependent methyl-directed DNA mismatch repair. May act as a 'molecular matchmaker', a protein that promotes the formation of a stable complex between two or more DNA-binding proteins in an ATP-dependent manner without itself being part of a final effector complex. This Nostoc punctiforme (strain ATCC 29133 / PCC 73102) protein is DNA mismatch repair protein MutL.